Here is a 60-residue protein sequence, read N- to C-terminus: Stress response protein YkoL (60 aa).

This chain is Stress response protein YkoL (ykoL), found in Bacillus subtilis (strain 168).